The primary structure comprises 460 residues: Solute carrier family 52, riboflavin transporter, member 3 (460 aa).

Residues 1–6 (MAFLTH) are Cytoplasmic-facing. A helical membrane pass occupies residues 7–27 (LLVCVFGMGSWVAINGLWVEL). Topologically, residues 28–37 (PLLVTELPEA) are extracellular. Residues 38–58 (WYLPSYLTVVIQLANIGPLLV) form a helical membrane-spanning segment. The Cytoplasmic segment spans residues 59–71 (TLMHRFRPGCLSE). A helical transmembrane segment spans residues 72–92 (VPVIFLILCVGTAACILLAFL). Residues 93 to 105 (WNVTSWIQGGQHS) lie on the Extracellular side of the membrane. Asn-94 is a glycosylation site (N-linked (GlcNAc...) asparagine). A helical transmembrane segment spans residues 106-126 (VAFIVLTFFLALVDCTSSVTF). Over 127–137 (LPFMSQLPTYY) the chain is Cytoplasmic. A helical transmembrane segment spans residues 138 to 158 (LTTFFIGEGLSGLLPALVALV). At 159-211 (QGSGITTCVNVTETPGTTLNTMETPITQGNLSPSLPSPSWHQESRYLAPRFSP) the chain is on the extracellular side. A glycan (N-linked (GlcNAc...) asparagine) is linked at Asn-168. A helical transmembrane segment spans residues 212–232 (LLFFLLLSFLTGCCLVAFFLL). The Cytoplasmic portion of the chain corresponds to 233 to 291 (QRQPWGRQGSIEDLLHSQVTLHSIRPRDTEDTSSLGAPVSSPGKGSVEASVASLRPAQL). Phosphoserine occurs at positions 242 and 266. A helical membrane pass occupies residues 292–312 (AFIYSVVAFVNALTNGVLPSV). The Extracellular segment spans residues 313-326 (QTYSCLPYGPVAYH). The chain crosses the membrane as a helical span at residues 327-347 (LSATLSSVASPLACFLPIFLP). Topologically, residues 348-350 (NRS) are cytoplasmic. A helical transmembrane segment spans residues 351–371 (LLFLGVLTVLGTGFGAYNMAM). Residues 372–387 (AAMSPCPVLQGHWGGE) lie on the Extracellular side of the membrane. A disulfide bridge connects residues Cys-377 and Cys-454. Residues 388–408 (VLIVLSWVLFAACLSYVKVML) form a helical membrane-spanning segment. The Cytoplasmic portion of the chain corresponds to 409–418 (GVILRDRSRS). Residues 419–439 (ALLWCGAAVQLGSLIGALLMF) form a helical membrane-spanning segment. The Extracellular portion of the chain corresponds to 440-460 (PLVNVLKLFSSADYCSLDCSV).

It belongs to the riboflavin transporter family. As to expression, within the small intestine, it is particularly expressed in the jujenum and the ileum. Almost negligible expression in the stomach, duodenum, and large intestine.

Its subcellular location is the cell membrane. It catalyses the reaction riboflavin(in) = riboflavin(out). Functionally, plasma membrane transporter mediating the uptake by cells of the water soluble vitamin B2/riboflavin that plays a key role in biochemical oxidation-reduction reactions of the carbohydrate, lipid, and amino acid metabolism. The chain is Solute carrier family 52, riboflavin transporter, member 3 (Slc52a3) from Mus musculus (Mouse).